The following is a 241-amino-acid chain: Adenosine 5'-phosphosulfate reductase (241 aa).

Positions 122, 123, 205, and 208 each coordinate [4Fe-4S] cluster. Catalysis depends on cysteine 231, which acts as the Nucleophile; cysteine thiosulfonate intermediate.

The protein belongs to the PAPS reductase family. CysH subfamily. [4Fe-4S] cluster is required as a cofactor.

Its subcellular location is the cytoplasm. It catalyses the reaction [thioredoxin]-disulfide + sulfite + AMP + 2 H(+) = adenosine 5'-phosphosulfate + [thioredoxin]-dithiol. It participates in sulfur metabolism; hydrogen sulfide biosynthesis; sulfite from sulfate. In terms of biological role, catalyzes the formation of sulfite from adenosine 5'-phosphosulfate (APS) using thioredoxin as an electron donor. This is Adenosine 5'-phosphosulfate reductase from Shouchella clausii (strain KSM-K16) (Alkalihalobacillus clausii).